Consider the following 111-residue polypeptide: Resistin-like alpha (111 aa).

The N-terminal stretch at 1 to 23 is a signal peptide; that stretch reads MKTTTCSLLICISLLQLMVPVNT. Cystine bridges form between Cys-55/Cys-108, Cys-67/Cys-107, Cys-76/Cys-93, Cys-78/Cys-95, and Cys-82/Cys-97.

It belongs to the resistin/FIZZ family. As to quaternary structure, monomer. In terms of tissue distribution, highest levels in adipose tissue.

The protein localises to the secreted. Functionally, probable hormone. Plays a role in pulmonary vascular remodeling. In Mus musculus (Mouse), this protein is Resistin-like alpha (Retnla).